The primary structure comprises 921 residues: AdoMet-dependent rRNA methyltransferase SPB1 (921 aa).

The S-adenosyl-L-methionine site is built by Gly-58, Trp-60, Asp-78, Asp-94, and Asp-119. Lys-159 serves as the catalytic Proton acceptor. Residues 367–414 adopt a coiled-coil conformation; it reads VEEMDEDDQIDDELARLNEEAARKARKERRRKNELRQKKILKMQLQMT. Disordered stretches follow at residues 448–476, 491–604, 635–713, 814–835, and 866–921; these read ALIQ…DPET, EFKQ…KRSL, ELDE…GKQK, LEKA…EKEK, and RGLK…GPRN. Basic and acidic residues predominate over residues 491-522; it reads EFKQKQSERDAKFRAKQARLQDAKNDSWHGIK. Composition is skewed to acidic residues over residues 523-542, 555-568, 635-684, and 697-708; these read DDEE…ESEG, ETFD…EEDE, ELDE…DDFE, and DEEWDLNGEDEE. Positions 796–835 form a coiled coil; it reads IKKVAEAKARKKMRTLRRLEKAQKKAETINENEDISEKEK. Residues 814 to 823 are compositionally biased toward basic and acidic residues; the sequence is LEKAQKKAET. Residues 868–879 show a composition bias toward basic residues; the sequence is LKGRPKGTKGRY. Basic and acidic residues predominate over residues 880-892; sequence KMVDPRMKKELRA.

It belongs to the class I-like SAM-binding methyltransferase superfamily. RNA methyltransferase RlmE family. SPB1 subfamily. As to quaternary structure, component of the nucleolar and nucleoplasmic pre-60S ribosomal particle.

It is found in the nucleus. The protein resides in the nucleolus. It carries out the reaction a ribonucleotide in rRNA + S-adenosyl-L-methionine = a 2'-O-methylribonucleotide in rRNA + S-adenosyl-L-homocysteine + H(+). Required for proper assembly of pre-ribosomal particles during the biogenesis of the 60S ribosomal subunit. This chain is AdoMet-dependent rRNA methyltransferase SPB1, found in Mycosarcoma maydis (Corn smut fungus).